A 187-amino-acid polypeptide reads, in one-letter code: dITP/XTP pyrophosphatase (187 aa).

7-12 (TNNPYK) is a substrate binding site. Residues glutamate 36 and aspartate 65 each contribute to the Mg(2+) site. Aspartate 65 (proton acceptor) is an active-site residue. Substrate is bound by residues threonine 66, 140–143 (FGYD), lysine 163, and 168–169 (HR).

The protein belongs to the HAM1 NTPase family. Homodimer. It depends on Mg(2+) as a cofactor.

The enzyme catalyses XTP + H2O = XMP + diphosphate + H(+). It carries out the reaction dITP + H2O = dIMP + diphosphate + H(+). It catalyses the reaction ITP + H2O = IMP + diphosphate + H(+). Functionally, pyrophosphatase that catalyzes the hydrolysis of nucleoside triphosphates to their monophosphate derivatives, with a high preference for the non-canonical purine nucleotides XTP (xanthosine triphosphate), dITP (deoxyinosine triphosphate) and ITP. Seems to function as a house-cleaning enzyme that removes non-canonical purine nucleotides from the nucleotide pool, thus preventing their incorporation into DNA/RNA and avoiding chromosomal lesions. The protein is dITP/XTP pyrophosphatase of Pyrobaculum aerophilum (strain ATCC 51768 / DSM 7523 / JCM 9630 / CIP 104966 / NBRC 100827 / IM2).